The sequence spans 168 residues: Ubiquitin-fold modifier-conjugating enzyme 1 (168 aa).

Catalysis depends on Cys-119, which acts as the Glycyl thioester intermediate.

The protein belongs to the ubiquitin-conjugating enzyme family. UFC1 subfamily.

Functionally, E2-like enzyme which forms an intermediate with UFM1 via a thioester linkage. In Drosophila grimshawi (Hawaiian fruit fly), this protein is Ubiquitin-fold modifier-conjugating enzyme 1.